Consider the following 391-residue polypeptide: Na(+)/H(+) antiporter NhaA (391 aa).

Helical transmembrane passes span 14 to 34, 59 to 79, 95 to 115, 124 to 144, 154 to 174, 177 to 197, 213 to 233, 261 to 281, 287 to 307, 328 to 348, and 363 to 383; these read AGGI…NSPL, LLLW…GLEV, SLPT…YLFF, VGWA…MALL, VFLL…IALF, TDLS…LVAL, IILW…GVVI, FLIL…NVGF, PVPV…VLLF, IAPV…IASL, and IGIL…LSKV.

It belongs to the NhaA Na(+)/H(+) (TC 2.A.33) antiporter family.

It localises to the cell inner membrane. It catalyses the reaction Na(+)(in) + 2 H(+)(out) = Na(+)(out) + 2 H(+)(in). Its function is as follows. Na(+)/H(+) antiporter that extrudes sodium in exchange for external protons. The sequence is that of Na(+)/H(+) antiporter NhaA from Shewanella amazonensis (strain ATCC BAA-1098 / SB2B).